The chain runs to 738 residues: Protostadienol synthase A (738 aa).

The PFTB 1 repeat unit spans residues Lys-132–Gly-173. The active-site Proton donor is the Asp-463. 3 PFTB repeats span residues Leu-490–Val-531, Val-567–Gly-607, and Cys-616–Gly-663.

It belongs to the terpene cyclase/mutase family.

It carries out the reaction (S)-2,3-epoxysqualene = (17Z)-protosta-17(20),24-dien-3beta-ol. In terms of biological role, protostadienol synthase which cyclizes (3S)-oxidosqualene to (17Z)-protosta-17(20),24-dien-3-beta-ol (protostadienol), the biosynthetic precursor of helvolic acid, a secondary metabolite which promotes virulence. This chain is Protostadienol synthase A (pdsA), found in Neosartorya fischeri (strain ATCC 1020 / DSM 3700 / CBS 544.65 / FGSC A1164 / JCM 1740 / NRRL 181 / WB 181) (Aspergillus fischerianus).